The chain runs to 191 residues: Leucyl/phenylalanyl-tRNA--protein transferase (191 aa).

This sequence belongs to the L/F-transferase family.

The protein resides in the cytoplasm. The catalysed reaction is N-terminal L-lysyl-[protein] + L-leucyl-tRNA(Leu) = N-terminal L-leucyl-L-lysyl-[protein] + tRNA(Leu) + H(+). It catalyses the reaction N-terminal L-arginyl-[protein] + L-leucyl-tRNA(Leu) = N-terminal L-leucyl-L-arginyl-[protein] + tRNA(Leu) + H(+). The enzyme catalyses L-phenylalanyl-tRNA(Phe) + an N-terminal L-alpha-aminoacyl-[protein] = an N-terminal L-phenylalanyl-L-alpha-aminoacyl-[protein] + tRNA(Phe). Functionally, functions in the N-end rule pathway of protein degradation where it conjugates Leu, Phe and, less efficiently, Met from aminoacyl-tRNAs to the N-termini of proteins containing an N-terminal arginine or lysine. The protein is Leucyl/phenylalanyl-tRNA--protein transferase of Gloeothece citriformis (strain PCC 7424) (Cyanothece sp. (strain PCC 7424)).